Consider the following 807-residue polypeptide: ATP-binding cassette sub-family F member 1 (807 aa).

Positions 1–227 (MPKGPKQQPP…KEKAKKAEQM (227 aa)) are disordered. Residue S22 is modified to Phosphoserine. Positions 29-39 (KKGKKDKKTKK) are enriched in basic residues. The segment covering 47-65 (VEDRQAGEEEKVLKEKEQQ) has biased composition (basic and acidic residues). Residues 73-85 (QKKKRDTRKGRRK) are compositionally biased toward basic residues. S106 carries the phosphoserine modification. Phosphoserine; by CK2 is present on residues S110 and S141. Residues 148–161 (EKHPPKPAKPEKNR) show a composition bias toward basic and acidic residues. S167 carries the phosphoserine modification. Positions 197 to 207 (LDDEEEQDEEE) are enriched in acidic residues. The segment covering 208-227 (IKEKEPPKQGKEKAKKAEQM) has biased composition (basic and acidic residues). In terms of domain architecture, ABC transporter 1 spans 266 to 510 (IKLEKFSISA…MYQQKQKELL (245 aa)). Position 298–305 (298–305 (GPNGKGKT)) interacts with ATP. Positions 521 to 542 (KELKAGGKSTKQAEKQTKEALT) are enriched in basic and acidic residues. Positions 521–564 (KELKAGGKSTKQAEKQTKEALTRKQQKCRRKNQDEESQEAPELL) are disordered. Position 557 is a phosphoserine (S557). Positions 587–802 (LGLHGVTFGY…VLEALGEVMV (216 aa)) constitute an ABC transporter 2 domain. 620 to 627 (GPNGVGKS) is a binding site for ATP.

The protein belongs to the ABC transporter superfamily. ABCF family. EF3 subfamily. In terms of assembly, interacts (via N-terminus) with EIF2S1; the interaction is independent of its phosphorylated status. Associates (via both ABC transporter domains) with the ribosomes. Phosphorylated at phosphoserine and phosphothreonine. Phosphorylation on Ser-110 and Ser-141 by CK2; inhibits association of EIF2 with ribosomes.

The protein localises to the cytoplasm. Its subcellular location is the nucleus. It is found in the nucleoplasm. The protein resides in the nucleus envelope. Required for efficient Cap- and IRES-mediated mRNA translation initiation. Not involved in the ribosome biogenesis. The protein is ATP-binding cassette sub-family F member 1 (ABCF1) of Sus scrofa (Pig).